The sequence spans 387 residues: Diels-Alderase ORF3 (387 aa).

Belongs to the Diels-Alderase family.

It functions in the pathway secondary metabolite biosynthesis. Functionally, diels-Alderase; part of the gene cluster that mediates the biosynthesis of a tyrosine-derived cytochalasan acting as a fungal signal recognized by resistant rice plants and leads to avirulence in Pi33 resistant rice cultivars. The first step in the pathway is catalyzed by the hybrid PKS-NRPS ACE1, assisted by the enoyl reductase RAP1, that are responsible for fusion of the tyrosine precursor and the polyketide backbone. The polyketide synthase module (PKS) of ACE1 is responsible for the synthesis of the polyketide backbone and the downstream nonribosomal peptide synthetase (NRPS) amidates the carboxyl end of the polyketide with the tyrosine precursor. Because ACE1 lacks a designated enoylreductase (ER) domain, the required activity is provided the enoyl reductase RAP1. Reduction by the hydrolyase ORFZ, followed by dehydration and intra-molecular Diels-Alder cyclization by the Diels-Alderase ORF3 then yield the required isoindolone-fused macrocycle. A number of oxidative steps catalyzed by the tailoring enzymes identified within the cluster, including cytochrome P450 monooxygenases CYP1 to CYP4, the FAD-linked oxidoreductase OXR2 and the short-chain dehydrogenase/reductase OXR1, are further required to afford the final cytochalasans that confer avirulence and which have still to be identified. The monooxygenase CYP1 has been shown to be a site-selective C-18 hydroxylase whereas the function of CYP3 is the site-selective epoxidation of the C-6/C-7 olefin that is present in some intermediate compounds. Finally, SYN2 and RAP2 are not required for avirulence in Pi33 resistant rice cultivars. This is Diels-Alderase ORF3 from Pyricularia oryzae (strain 70-15 / ATCC MYA-4617 / FGSC 8958) (Rice blast fungus).